The following is an 87-amino-acid chain: Small ribosomal subunit protein bS20 (87 aa).

The protein belongs to the bacterial ribosomal protein bS20 family.

Its function is as follows. Binds directly to 16S ribosomal RNA. The chain is Small ribosomal subunit protein bS20 from Alkaliphilus metalliredigens (strain QYMF).